Here is a 118-residue protein sequence, read N- to C-terminus: MIATIVTSVSIIFVVLGALISAFAATGLIRLRDVYSRAHAAGKAATLGAMFLLFGAFLYFIGTEGYVNMQLIIGIIFVFITGPLSSHLIMKAAYNIKTPYTKDTKIDEIKEDMKHTKL.

Transmembrane regions (helical) follow at residues 9-29 (VSIIFVVLGALISAFAATGLI), 47-67 (LGAMFLLFGAFLYFIGTEGYV), and 69-89 (MQLIIGIIFVFITGPLSSHLI).

The protein belongs to the CPA3 antiporters (TC 2.A.63) subunit G family. In terms of assembly, may form a heterooligomeric complex that consists of seven subunits: mnhA1, mnhB1, mnhC1, mnhD1, mnhE1, mnhF1 and mnhG1.

Its subcellular location is the cell membrane. In terms of biological role, mnh complex is a Na(+)/H(+) antiporter involved in Na(+) excretion. The polypeptide is Na(+)/H(+) antiporter subunit G1 (mnhG1) (Staphylococcus epidermidis (strain ATCC 35984 / DSM 28319 / BCRC 17069 / CCUG 31568 / BM 3577 / RP62A)).